The primary structure comprises 72 residues: Prokaryotic ubiquitin-like protein Pup (72 aa).

A compositionally biased stretch (gly residues) spans 1–11 (MAQRDTGGGQQ). A disordered region spans residues 1–41 (MAQRDTGGGQQRTGRRDDETAEAEVEESGASDLKERHEKLS). The segment covering 19 to 29 (ETAEAEVEESG) has biased composition (acidic residues). A coiled-coil region spans residues 22-61 (EAEVEESGASDLKERHEKLSEDVDSLLDEIDDVLEENAEE). Residues 28 to 66 (SGASDLKERHEKLSEDVDSLLDEIDDVLEENAEEFVKGY) are ARC ATPase binding. Residues 32–41 (DLKERHEKLS) show a composition bias toward basic and acidic residues. Q72 is subject to Deamidated glutamine. An Isoglutamyl lysine isopeptide (Gln-Lys) (interchain with K-? in acceptor proteins) cross-link involves residue Q72.

This sequence belongs to the prokaryotic ubiquitin-like protein family. Strongly interacts with the proteasome-associated ATPase ARC through a hydrophobic interface; the interacting region of Pup lies in its C-terminal half. There is one Pup binding site per ARC hexamer ring. Post-translationally, is modified by deamidation of its C-terminal glutamine to glutamate by the deamidase Dop, a prerequisite to the subsequent pupylation process.

It functions in the pathway protein degradation; proteasomal Pup-dependent pathway. In terms of biological role, protein modifier that is covalently attached to lysine residues of substrate proteins, thereby targeting them for proteasomal degradation. The tagging system is termed pupylation. This chain is Prokaryotic ubiquitin-like protein Pup, found in Parafrankia sp. (strain EAN1pec).